Consider the following 965-residue polypeptide: Fibronectin-binding protein A (965 aa).

A signal peptide spans 1–36 (MKNNLRYGIRKHKLGAASVFLGTMIVIGMGQDKEAA). The YSIRK-G/S signaling motif signature appears at 7-18 (YGIRKHKLGAAS). The tract at residues 37-206 (ASEQKTTTVE…VTSKVTVEDE (170 aa)) is disordered. The tract at residues 37–514 (ASEQKTTTVE…SNKANGDGKY (478 aa)) is ligand-binding A region. A compositionally biased stretch (polar residues) spans 39 to 55 (EQKTTTVEENGNSATDN). Residues 59-74 (ETQTTTTNVNTIDETQ) are compositionally biased toward low complexity. Polar residues predominate over residues 75–92 (SYSATATEQPSNATQVTT). Residues 112 to 122 (TVKEEVVKEEA) are compositionally biased toward basic and acidic residues. Residues 126-139 (VKETTQSQDNSGDQ) show a composition bias toward polar residues. A compositionally biased stretch (basic and acidic residues) spans 179–193 (DVAEAKEASDAKVET). The segment at 194–514 (GTDVTSKVTV…SNKANGDGKY (321 aa)) is fibrinogen/elastin/tropoelastin-binding. A fibronectin-binding region spans residues 515-837 (GPIVDSNNFE…EGQQTIEEDT (323 aa)). Residues 548–577 (ENQDNTPLDIDYHTAIDGEGGYVDGYIETI) form a B-1 repeat. The interval 548–607 (ENQDNTPLDIDYHTAIDGEGGYVDGYIETIEETDSSAIDIDYHTAVDSEAGHVGGYTESS) is 2 X approximate tandem repeats. Residues 578–607 (EETDSSAIDIDYHTAVDSEAGHVGGYTESS) form a B-2 repeat. Disordered regions lie at residues 598 to 625 (GHVGGYTESSEESNPIDFEESTHENSKH), 743 to 774 (LGYEGGQNSGNQSFEEDTEEDKPKYEQGGNII), 794 to 903 (IEED…GKVV), and 916 to 942 (VAPTKQKQAKKSELPETGGEESTNKGM). A D-1; truncated repeat occupies 748 to 770 (GQNSGNQSFEEDTEEDKPKYEQG). The 4 X approximate tandem repeats stretch occupies residues 748–839 (GQNSGNQSFE…QQTIEEDTTP (92 aa)). Residues 771-785 (GNIIDIDFDSVPQIH) form a D-2; truncated repeat. One copy of the D-3 repeat lies at 786–824 (GFNKHNEIIEEDTNKDKPNYQFGGHNSVDFEEDTLPKVS). Positions 794-803 (IEEDTNKDKP) are enriched in basic and acidic residues. Residues 825–839 (GQNEGQQTIEEDTTP) form a D-4; truncated repeat. Over residues 839–885 (PPTPPTPEVPSEPGTPTPPTPEVPSEPGKPTPPTPEVPAEPGKPVPP) the composition is skewed to pro residues. 4 WR repeats span residues 840–853 (PTPPTPEVPSEPGT), 854–867 (PTPPTPEVPSEPGK), 868–881 (PTPPTPEVPAEPGK), and 882–895 (PVPPAKEEPKKPSK). The tract at residues 840–895 (PTPPTPEVPSEPGTPTPPTPEVPSEPGKPTPPTPEVPAEPGKPVPPAKEEPKKPSK) is 4 X tandem repeats, Pro-rich (WR). The LPXTG sorting signal motif lies at 929–933 (LPETG). Position 932 is a pentaglycyl murein peptidoglycan amidated threonine (threonine 932). Positions 933–965 (GGEESTNKGMLFGGLFSILGLALLRRNKKNHKA) are cleaved as a propeptide — removed by sortase.

The protein localises to the secreted. The protein resides in the cell wall. In terms of biological role, promotes bacterial attachment to multiple substrates, such as fibronectin (Fn), fibrinogen (Fg), elastin peptides and tropoelastin. This confers to S.aureus the ability to invade endothelial cells. Promotes adherence to and aggregation of activated platelets. This is Fibronectin-binding protein A (fnbA) from Staphylococcus aureus (strain MRSA252).